We begin with the raw amino-acid sequence, 736 residues long: Segment polarity protein dishevelled homolog DVL-2 (736 aa).

Positions 1-82 (MAETKVIYHL…RVVSWLASSE (82 aa)) constitute a DIX domain. The segment at 79–241 (ASSEGSQPDS…PRLERTSSFS (163 aa)) is disordered. Over residues 100 to 114 (EPPPPVPPPIPPPPA) the composition is skewed to pro residues. Positions 149-160 (MRRDRVRRRESS) are enriched in basic and acidic residues. Residues 181-195 (ESSSTLLTSEIETSI) are compositionally biased toward low complexity. Residues 205–217 (SRFSSSTEQSSAS) are compositionally biased toward polar residues. The span at 219–231 (LLKRHRRRRKQRP) shows a compositional bias: basic residues. Residues 254-326 (TVTLNMEKYN…NDDAVRVLRD (73 aa)) form the PDZ domain. The segment at 327-427 (IVHKPGPIVL…LASVVKVMAS (101 aa)) is interaction with custos. The 75-residue stretch at 428–502 (PESGLEVRDR…SEQCYYIFGD (75 aa)) folds into the DEP domain. Composition is skewed to low complexity over residues 574–593 (MGSA…SNRS) and 616–629 (KSGS…STRS). The interval 574–664 (MGSAGSQHSE…HPPSVHSYAA (91 aa)) is disordered.

This sequence belongs to the DSH family. As to quaternary structure, can form homomultimers. Interacts with prickle1. Interacts (via PDZ domain) with ccdc88c/dal and dact1-B/dpr. Interacts (via DIX domain) with ARP/Axin-related protein and dact1-A/frodo. Interacts with sdc4, possibly via fz7. Interacts directly (via DEP domain) with efnb1/ephrin-B1 and indirectly with the phosphorylated ephrin receptors ephb1 and ephb2, via association with SH domain-containing adapters. May interact with lrrc6. Interacts with custos (via NLS1 and NLS2); the interaction is negatively regulated by Wnt stimulation. Post-translationally, phosphorylated. Phosphorylation is controlled by frizzled proteins, correlates with the onset of embryo dorsalizing events and is higher in the dorsal half of early cleavage embryos. Phosphorylated on tyrosine residues in response to association with efnb1/ephrin-B1. Expressed equally in both animal-vegetal and dorsal-ventral directions of the early blastula. Becomes enriched on the dorsal side of the embryo after cortical rotation. Expressed along the anterior margin of eye field of neurulae (stage 16 embryos) and in the anterolateral crescent that borders the eye field. Continues to be expressed in the optic cup at stage 26. Expressed in the central nervous system throughout the early tailbud stage including the entire hindbrain.

It is found in the cytoplasm. The protein localises to the cytoplasmic vesicle. It localises to the cell projection. The protein resides in the cilium. Its subcellular location is the nucleus. It is found in the cell membrane. Involved in at least 2 independent signaling cascades, controlling cell fate via canonical Wnt signaling and cell polarity via a planar cell polarity (PCP) cascade. Acts synergistically with dal/dapple-like to activate Wnt signaling, stabilizing ctnnb1/beta-catenin and leading to dorsal axis formation. Also prevents degradation of ctnnb1/beta-catenin by displacing gsk3 from a complex with ARP/Axin-related protein. Has an additional role in anterior-posterior (A/P) axis formation, specifying different neuroectodermal cell fates along the A/P axis in a dose-dependent manner by activating several early patterning genes. In the PCP pathway, required at the cell membrane for PCP-mediated neural and mesodermal convergent extension during gastrulation and subsequent neural tube closure, acting to activate jnk. Also involved in blastopore closure and archenteron elongation during early, but not late, gastrulation. Associates with ephrin receptors and ligands and acts as part of a downstream PCP pathway to mediate ephrin-mediated cell repulsion via activation of rhoa. Required for efnb1/ephrin-B1-driven movement of non-retinal progenitor cells into the retina during eye field formation. Patterns the hindbrain. Required for ciliogenesis. Controls the docking of basal bodies to the apical plasma membrane; mediates the activation, but not localization of rhoa at the apical surface of ciliated cells during basal body docking. Furthermore, required for the association of basal bodies with membrane-bound vesicles and the vesicle-trafficking protein exoc4/sec8, and this association is in turn required for basal body docking. Once basal bodies are docked, required for the planar polarization of basal bodies that underlies ciliary beating and the directional fluid flow across ciliated epithelia. The protein is Segment polarity protein dishevelled homolog DVL-2 (dvl2) of Xenopus laevis (African clawed frog).